A 382-amino-acid chain; its full sequence is F-box protein At3g27290 (382 aa).

In terms of domain architecture, F-box spans 16–105 (RKLELGLGEF…VDQMLFETLS (90 aa)).

The chain is F-box protein At3g27290 from Arabidopsis thaliana (Mouse-ear cress).